The following is a 77-amino-acid chain: Chaplin-H (77 aa).

The N-terminal stretch at 1 to 25 is a signal peptide; sequence MLKKVVAAAAATGGLVLAGAGMAVA. The region spanning 36–76 is the Chaplin domain; the sequence is SPGVLSGNVVQVPVHVPVNVCGNTISVIGLLNPAFGNVCIN. 2 forms amyloid fibrils in vitro regions span residues 38–54 and 57–72; these read GVLS…VPVN and GNTI…AFGN. Cys56 and Cys74 are disulfide-bonded.

Belongs to the chaplin family. Short chaplin subfamily. Homodimer; disulfide linked. About 10% of ChpH isolated from cell wall forms disulfide-bonded homodimers.

The protein localises to the cell surface. It localises to the secreted. The protein resides in the cell wall. It is found in the fimbrium. In terms of biological role, one of 8 partially redundant surface-active proteins required for efficient formation of aerial mycelium; the short chaplins assemble into a hydrophobic, amyloidal fibrillar surface layer that envelopes and protects aerial hyphae and spores, presumably anchored to the long chaplins. Chaplins have an overlapping function with the surface-active SapB peptide; chaplins are essential on minimal medium while on rich medium both chaplins and SapB are required for efficient aerial hyphae formation. Chaplins are also involved in cell attachment to a hydrophobic surface. Forms amyloid fibrils in vitro probably composed of stacked beta-sheets. A small chaplin extract (ChpD, ChpE, ChpF, ChpG and ChpH) self-assembles into 2 different amyloids; small fibrils at the air-water interface form an amphipathic membrane that resembles spore-surface structures involved in aerial hyphae formation, and hydrophilic fibrils in solution that resemble the fibers that attach cells to a hydrophobic surface. At the air-water interface the hydrophilic surface is in contact with water (probably equivalent to the peptidoglycan layer), while the hydrophobic face is exposed to the air, making the surface of the aerial hyphae hydrophobic. A minimal chaplin strain capable of forming aerial mycelium/hyphae on minimal medium contains ChpC, ChpE and ChpH. The strain also has restored rodlet formation on the hyphae surface. A small chaplin extract applied to a chaplin-deficient strain restores aerial hyphae formation. The small chaplin extract forms an amyloid-like structure similar to that seen on the surface of cells without rodlets (rdlA-rdlB deletions), and is highly surface active, reducing surface tension from 72 to 26 mJ/m(2), which probably allows escape of hyphae from an aqueous environment into air. The polypeptide is Chaplin-H (Streptomyces coelicolor (strain ATCC BAA-471 / A3(2) / M145)).